A 733-amino-acid chain; its full sequence is Zinc finger protein indra (733 aa).

A ZAD domain is found at 17 to 91 (VRCDHCGTSQ…RETVDRVQEQ (75 aa)). Cysteine 19, cysteine 22, cysteine 64, and cysteine 67 together coordinate Zn(2+). Positions 90–100 (EQPAKKTKVAE) are enriched in basic and acidic residues. The segment at 90 to 121 (EQPAKKTKVAEIEEPSTQESDKKAVKVPKKNT) is disordered. Phosphoserine occurs at positions 109, 153, and 176. Threonine 180 and threonine 188 each carry phosphothreonine. 2 consecutive C2H2-type zinc fingers follow at residues 228 to 251 (FQCP…QKEH) and 259 to 282 (YPCT…RDTH). Residues 285–316 (TFESEAKTKAKESKEKEAKSGAKNKIDAKAKE) show a composition bias toward basic and acidic residues. The interval 285–336 (TFESEAKTKAKESKEKEAKSGAKNKIDAKAKETNAVSQRKKPKEKKSKEKKT) is disordered. 2 consecutive C2H2-type zinc fingers follow at residues 416–439 (FQCE…KTVH) and 447–469 (FKCH…MTLH). 2 disordered regions span residues 499–525 (IENT…FTNR) and 540–622 (AFKT…SSDV). Polar residues predominate over residues 592–602 (SVSTTNGNSPA). Serine 600, serine 642, and serine 646 each carry phosphoserine. Threonine 647 bears the Phosphothreonine mark. 2 consecutive C2H2-type zinc fingers follow at residues 653–676 (LSCD…EKKH) and 708–733 (LPCG…RKRH). Phosphoserine is present on serine 654.

Belongs to the krueppel C2H2-type zinc-finger protein family.

Its subcellular location is the nucleus. It is found in the nucleolus. Functionally, required for rDNA copy number maintenance and non-random sister chromatid segregation (NRSS) following unequal sister chromatid exchange. Binds ribosomal DNA (rDNA) preferentially binding to intergenic spacers (IGS) regions on both X and Y chromosomes. Essential for NRSS, a mechanism which contributes to the recovery and maintenance of inherently unstable rDNA copy numbers so that the integrity of the germline genome is upheld over generations and germline immortality is sustained. May be involved in transcriptional regulation. The protein is Zinc finger protein indra of Drosophila melanogaster (Fruit fly).